The primary structure comprises 216 residues: Lipoprotein signal peptidase (216 aa).

The tract at residues 1–21 is disordered; sequence MATSRTAPTRAPSLRSSPALE. The next 3 helical transmembrane spans lie at 31–51, 89–109, and 114–134; these read VGAL…DQIT, GSTW…IWYA, and STAW…NLTD. Residues Asp149 and Asp164 contribute to the active site. The helical transmembrane segment at 159 to 179 threads the bilayer; sequence IFNLADVAIVFSMGLFLLLTL. The segment at 189–216 is disordered; the sequence is QRDEGAGVSSASPAGDESAADKPENLSA. The span at 207–216 shows a compositional bias: basic and acidic residues; sequence AADKPENLSA.

It belongs to the peptidase A8 family.

Its subcellular location is the cell membrane. The enzyme catalyses Release of signal peptides from bacterial membrane prolipoproteins. Hydrolyzes -Xaa-Yaa-Zaa-|-(S,diacylglyceryl)Cys-, in which Xaa is hydrophobic (preferably Leu), and Yaa (Ala or Ser) and Zaa (Gly or Ala) have small, neutral side chains.. Its pathway is protein modification; lipoprotein biosynthesis (signal peptide cleavage). In terms of biological role, this protein specifically catalyzes the removal of signal peptides from prolipoproteins. In Leifsonia xyli subsp. xyli (strain CTCB07), this protein is Lipoprotein signal peptidase.